A 279-amino-acid chain; its full sequence is Undecaprenyl-diphosphatase (279 aa).

The next 8 helical transmembrane spans lie at leucine 2–leucine 22, alanine 44–isoleucine 64, tryptophan 85–leucine 105, phenylalanine 113–isoleucine 133, valine 163–leucine 183, threonine 188–leucine 208, alanine 223–isoleucine 243, and phenylalanine 255–phenylalanine 275.

This sequence belongs to the UppP family.

It localises to the cell membrane. It carries out the reaction di-trans,octa-cis-undecaprenyl diphosphate + H2O = di-trans,octa-cis-undecaprenyl phosphate + phosphate + H(+). Functionally, catalyzes the dephosphorylation of undecaprenyl diphosphate (UPP). Confers resistance to bacitracin. In Streptococcus pyogenes serotype M5 (strain Manfredo), this protein is Undecaprenyl-diphosphatase.